We begin with the raw amino-acid sequence, 276 residues long: Eukaryotic translation initiation factor 3 subunit G-2 (276 aa).

In terms of domain architecture, RRM spans 196–274 (SAVRISNLSE…LILCVEWSKP (79 aa)).

This sequence belongs to the eIF-3 subunit G family. As to quaternary structure, component of the eukaryotic translation initiation factor 3 (eIF-3) complex. The eIF-3 complex interacts with pix.

It is found in the cytoplasm. Functionally, RNA-binding component of the eukaryotic translation initiation factor 3 (eIF-3) complex, which is involved in protein synthesis of a specialized repertoire of mRNAs and, together with other initiation factors, stimulates binding of mRNA and methionyl-tRNAi to the 40S ribosome. The eIF-3 complex specifically targets and initiates translation of a subset of mRNAs involved in cell proliferation. This subunit can bind 18S rRNA. This chain is Eukaryotic translation initiation factor 3 subunit G-2, found in Drosophila persimilis (Fruit fly).